Here is a 462-residue protein sequence, read N- to C-terminus: MGQDAFMEPFGDTLGVFQCKIYLLLFGACSGLKVTVPSHTVHGVRGQALYLPVHYGFHTPASDIQIIWLFERPHTMPKYLLGSVNKSVVPDLEYQHKFTMMPPNASLLINPLQFPDEGNYIVKVNIQGNGTLSASQKIQVTVDDPVTKPVVQIHPPSGAVEYVGNMTLTCHVEGGTRLAYQWLKNGRPVHTSSTYSFSPQNNTLHIAPVTKEDIGNYSCLVRNPVSEMESDIIMPIIYYGPYGLQVNSDKGLKVGEVFTVDLGEAILFDCSADSHPPNTYSWIRRTDNTTYIIKHGPRLEVASEKVAQKTMDYVCCAYNNITGRQDETHFTVIITSVGLEKLAQKGKSLSPLASITGISLFLIISMCLLFLWKKYQPYKVIKQKLEGRPETEYRKAQTFSGHEDALDDFGIYEFVAFPDVSGVSRIPSRSVPASDCVSGQDLHSTVYEVIQHIPAQQQDHPE.

The signal sequence occupies residues 1 to 31 (MGQDAFMEPFGDTLGVFQCKIYLLLFGACSG). N-linked (GlcNAc...) asparagine glycosylation is found at asparagine 85, asparagine 129, and asparagine 165. 2 Ig-like C2-type domains span residues 149–233 (PVVQ…SDII) and 235–331 (PIIY…THFT). Intrachain disulfides connect cysteine 170–cysteine 219 and cysteine 270–cysteine 315. N-linked (GlcNAc...) asparagine glycosylation is present at asparagine 320. The chain crosses the membrane as a helical span at residues 352-372 (LASITGISLFLIISMCLLFLW). Residues 373–462 (KKYQPYKVIK…IPAQQQDHPE (90 aa)) are Cytoplasmic-facing.

Poly-ADP-ribosylated (PARsylated) by tankyrase TNKS during late G2 and prophase, leading to translocation to mitotic centrosomes. Post-translationally, N-glycosylated. As to expression, widely expressed.

It localises to the golgi apparatus membrane. The protein localises to the cytoplasm. Its subcellular location is the cytoskeleton. It is found in the spindle. The protein resides in the microtubule organizing center. It localises to the centrosome. The protein localises to the midbody. In terms of biological role, required during prometaphase for centrosome maturation. Following poly-ADP-ribosylation (PARsylation) by TNKS, translocates from the Golgi apparatus to mitotic centrosomes and plays a key role in the formation of robust microtubules for prompt movement of chromosomes: anchors AKAP9/CG-NAP, a scaffold protein of the gamma-tubulin ring complex and promotes centrosome maturation. This chain is HEPACAM family member 2 (HEPACAM2), found in Homo sapiens (Human).